Here is a 234-residue protein sequence, read N- to C-terminus: Orotidine 5'-phosphate decarboxylase (234 aa).

Substrate contacts are provided by residues D11, K33, 60–69 (DLKFHDIPNT), T120, R181, Q190, G210, and R211. Residue K62 is the Proton donor of the active site.

The protein belongs to the OMP decarboxylase family. Type 1 subfamily. As to quaternary structure, homodimer.

It carries out the reaction orotidine 5'-phosphate + H(+) = UMP + CO2. Its pathway is pyrimidine metabolism; UMP biosynthesis via de novo pathway; UMP from orotate: step 2/2. In terms of biological role, catalyzes the decarboxylation of orotidine 5'-monophosphate (OMP) to uridine 5'-monophosphate (UMP). The protein is Orotidine 5'-phosphate decarboxylase of Shewanella sediminis (strain HAW-EB3).